A 229-amino-acid chain; its full sequence is uncharacterized protein (229 aa).

The 116-residue stretch at 102–217 (RRRTVRVEPD…REKVRRYVFE (116 aa)) folds into the PilZ domain.

This sequence to A.aeolicus aq_820 and aq_1211.

This is an uncharacterized protein from Aquifex aeolicus (strain VF5).